The primary structure comprises 272 residues: HMP-PP phosphatase (272 aa).

Aspartate 8 serves as the catalytic Nucleophile. Positions 8, 10, and 212 each coordinate Mg(2+).

The protein belongs to the HAD-like hydrolase superfamily. Cof family. Mg(2+) is required as a cofactor.

The catalysed reaction is 4-amino-2-methyl-5-(diphosphooxymethyl)pyrimidine + H2O = 4-amino-2-methyl-5-(phosphooxymethyl)pyrimidine + phosphate + H(+). Catalyzes the hydrolysis of 4-amino-2-methyl-5-hydroxymethylpyrimidine pyrophosphate (HMP-PP) to 4-amino-2-methyl-5-hydroxymethylpyrimidine phosphate (HMP-P). This is HMP-PP phosphatase from Citrobacter koseri (strain ATCC BAA-895 / CDC 4225-83 / SGSC4696).